Here is a 460-residue protein sequence, read N- to C-terminus: Transcription factor TGA10 (460 aa).

A compositionally biased stretch (basic residues) spans 1–11 (MQGHHQNHHQH). Disordered stretches follow at residues 1–29 (MQGH…NKDG) and 43–163 (LDGQ…PKTL). Positions 12-21 (LSSSSATSSH) are enriched in low complexity. 2 stretches are compositionally biased toward polar residues: residues 65 to 81 (TQNL…NIFP) and 121 to 136 (DLTN…QGSK). Basic and acidic residues predominate over residues 138 to 162 (IKKEGNRKGLASSDHDIPKSSDPKT). The bZIP domain maps to 159-203 (DPKTLRRLAQNREAARKSRLRKKAYVQQLESCRIKLTQLEQEIQR). Residues 161 to 181 (KTLRRLAQNREAARKSRLRKK) are basic motif. The Nuclear localization signal motif lies at 163-170 (LRRLAQNR). The tract at residues 187–201 (LESCRIKLTQLEQEI) is leucine-zipper. The DOG1 domain maps to 236-455 (AAVFDMEYAR…QALSSLWLAR (220 aa)).

The protein belongs to the bZIP family. In terms of assembly, homodimer. Binds DNA as a dimer. Interacts with floral glutaredoxins GRXC7/ROXY1 and GRXC8/ROXY2 in the nucleus. Interacts with TGA1, TGA2, TGA3, TGA4, TGA5, TGA6, TGA7, TGA9 and PAN. In terms of tissue distribution, expressed at low levels in inflorescence apex and flowers.

It is found in the nucleus. In terms of biological role, together with TGA9, basic leucine-zipper transcription factor required for anther development, probably via the activation of SPL expression in anthers and via the regulation of genes with functions in early and middle tapetal development. Required for signaling responses to pathogen-associated molecular patterns (PAMPs) such as flg22 that involves chloroplastic reactive oxygen species (ROS) production and subsequent expression of H(2)O(2)-responsive genes. This is Transcription factor TGA10 from Arabidopsis thaliana (Mouse-ear cress).